The sequence spans 158 residues: NAD(P)H-quinone oxidoreductase subunit J, chloroplastic (158 aa).

This sequence belongs to the complex I 30 kDa subunit family. In terms of assembly, NDH is composed of at least 16 different subunits, 5 of which are encoded in the nucleus.

The protein localises to the plastid. It localises to the chloroplast thylakoid membrane. The enzyme catalyses a plastoquinone + NADH + (n+1) H(+)(in) = a plastoquinol + NAD(+) + n H(+)(out). It carries out the reaction a plastoquinone + NADPH + (n+1) H(+)(in) = a plastoquinol + NADP(+) + n H(+)(out). In terms of biological role, NDH shuttles electrons from NAD(P)H:plastoquinone, via FMN and iron-sulfur (Fe-S) centers, to quinones in the photosynthetic chain and possibly in a chloroplast respiratory chain. The immediate electron acceptor for the enzyme in this species is believed to be plastoquinone. Couples the redox reaction to proton translocation, and thus conserves the redox energy in a proton gradient. The chain is NAD(P)H-quinone oxidoreductase subunit J, chloroplastic from Lotus japonicus (Lotus corniculatus var. japonicus).